A 114-amino-acid polypeptide reads, in one-letter code: Cytochrome c oxidase subunit 7A2-like, mitochondrial (114 aa).

Residues 1–55 (MYYKFSGFTQKLAGAWASDAYSPQGLRPVVSTEAPPIIFATPTKLSSGPTAYDYA) constitute a mitochondrion transit peptide. Residue K69 is modified to N6-acetyllysine. The chain crosses the membrane as a helical span at residues 82 to 107 (PDQMLYRTTMALTVGGTIYCLIALYM).

It belongs to the cytochrome c oxidase VIIa family. As to quaternary structure, interacts with the mitochondrial respiratory complexes III (CIII) and IV (CIV), promoting their association.

It localises to the mitochondrion inner membrane. In terms of biological role, assembly factor that mediates the formation of some mitochondrial respiratory supercomplexes (respirasomes), thereby promoting oxidative phosphorylation and energy metabolism. Acts as a molecular adapter that associates with both mitochondrial respiratory complexes III (CIII) and IV (CIV), promoting their association. Mediates the formation of various mitochondrial respiratory supercomplexes, such as MCIII(2)IV(2), composed of two CIII and two CIV, and the CS-respirasome (MCI(1)III(2)IV(2)), composed of one CI, two CIII and two CIV. Not involved in the formation of the canonical respirasome (MCI(1)III(2)IV(1)), composed of one CI, two CIII and one CIV. The formation of different respirasomes is important for cell adaptation to oxygen conditions and prevent metabolic exhaustion: supercomplexes mediated by COX7A2L/SCAF1 are required to maintain oxidative phosphorylation upon low oxygen conditions and promote metabolic rewiring toward glycolysis. This chain is Cytochrome c oxidase subunit 7A2-like, mitochondrial, found in Bos taurus (Bovine).